A 387-amino-acid polypeptide reads, in one-letter code: Paralemmin-1 (387 aa).

At M1 the chain carries N-acetylmethionine. Positions 7-104 form a coiled coil; that stretch reads ETISQQERLQ…IEELENADTL (98 aa). 2 disordered regions span residues 22-78 and 98-133; these read RRRQ…QEDE and LENA…DRKA. 2 stretches are compositionally biased toward basic and acidic residues: residues 25-41 and 69-78; these read QAEV…DRRQ and DMRKQMQEDE. Residue S116 is modified to Phosphoserine. Residues 116-125 are compositionally biased toward pro residues; the sequence is SPGPVVPAPC. 2 positions are modified to phosphothreonine: T142 and T146. S163 bears the Phosphoserine mark. Phosphothreonine is present on T244. S246 is subject to Phosphoserine. Disordered regions lie at residues 246–297 and 334–378; these read SEAG…QEPP and AAEP…DMKK. Residues 258–273 are compositionally biased toward basic and acidic residues; sequence GPSEEVVRTTPSRREI. Over residues 286 to 297 the composition is skewed to low complexity; it reads GPPGIQPGQEPP. Phosphoserine is present on residues S346 and S369. 2 S-palmitoyl cysteine lipidation sites follow: C381 and C383. C384 bears the Cysteine methyl ester mark. The S-farnesyl cysteine moiety is linked to residue C384. The propeptide at 385-387 is removed in mature form; that stretch reads SIM.

This sequence belongs to the paralemmin family. Interacts with dopamine receptor DRD3. Post-translationally, phosphorylated.

It is found in the cell membrane. The protein resides in the cell projection. Its subcellular location is the filopodium membrane. It localises to the axon. The protein localises to the dendrite. It is found in the dendritic spine. The protein resides in the basolateral cell membrane. Its subcellular location is the apicolateral cell membrane. Involved in plasma membrane dynamics and cell process formation. Necessary for axonal and dendritic filopodia induction, for dendritic spine maturation and synapse formation in a palmitoylation-dependent manner. In Sus scrofa (Pig), this protein is Paralemmin-1 (PALM).